The primary structure comprises 623 residues: V-type proton ATPase catalytic subunit A (623 aa).

252-259 (GAFGCGKT) contributes to the ATP binding site.

Belongs to the ATPase alpha/beta chains family. V-ATPase is a heteromultimeric enzyme composed of a peripheral catalytic V1 complex (main components: subunits A, B, C, D, E, and F) attached to an integral membrane V0 proton pore complex (main component: the proteolipid protein).

It catalyses the reaction ATP + H2O + 4 H(+)(in) = ADP + phosphate + 5 H(+)(out). Its function is as follows. Catalytic subunit of the peripheral V1 complex of vacuolar ATPase. V-ATPase vacuolar ATPase is responsible for acidifying a variety of intracellular compartments in eukaryotic cells. The sequence is that of V-type proton ATPase catalytic subunit A from Beta vulgaris (Sugar beet).